Reading from the N-terminus, the 196-residue chain is Interleukin-23 subunit alpha (196 aa).

The first 21 residues, 1-21 (MLDCRAVIMLWLLPWVTQGLA), serve as a signal peptide directing secretion.

Belongs to the IL-6 superfamily. In terms of assembly, heterodimer with IL12B; disulfide-linked. The heterodimer is known as interleukin IL-23. Interacts with IL23R; this interaction enables recruitment of IL12RB1. In terms of tissue distribution, secreted by activated dendritic cells (at protein level). Detected in various tissues with higher expression in polarized Th1 cells and activated macrophages.

Its subcellular location is the secreted. Functionally, associates with IL12B to form the IL-23 interleukin, a heterodimeric cytokine which functions in innate and adaptive immunity. IL-23 may constitute with IL-17 an acute response to infection in peripheral tissues. IL-23 binds to a heterodimeric receptor complex composed of IL12RB1 and IL23R, activates the Jak-Stat signaling cascade, stimulates memory rather than naive T-cells and promotes production of pro-inflammatory cytokines. IL-23 induces autoimmune inflammation and thus may be responsible for autoimmune inflammatory diseases and may be important for tumorigenesis. In terms of biological role, associates with IL12B to form the pro-inflammatory cytokine IL-23 that plays different roles in innate and adaptive immunity. Released by antigen-presenting cells such as dendritic cells or macrophages, binds to a heterodimeric receptor complex composed of IL12RB1 and IL23R to activate JAK2 and TYK2 which then phosphorylate the receptor to form a docking site leading to the phosphorylation of STAT3 and STAT4. This process leads to activation of several pathways including p38 MAPK or NF-kappa-B and promotes the production of pro-inflammatory cytokines such as interleukin-17A/IL17A. In turn, participates in the early and effective intracellular bacterial clearance. Promotes the expansion and survival of T-helper 17 cells, a CD4-positive helper T-cell subset that produces IL-17, as well as other IL-17-producing cells. The sequence is that of Interleukin-23 subunit alpha (Il23a) from Mus musculus (Mouse).